The chain runs to 198 residues: Transmembrane protein 17 (198 aa).

2 N-linked (GlcNAc...) asparagine glycosylation sites follow: N13 and N23. Helical transmembrane passes span 45-65 (MSLY…IMML), 78-98 (FIVV…LYLG), 110-130 (LAGF…FLLF), and 142-162 (AVHI…FLTL).

This sequence belongs to the TMEM17 family. In terms of assembly, part of the tectonic-like complex (also named B9 complex).

It localises to the cell projection. The protein localises to the cilium membrane. In terms of biological role, transmembrane component of the tectonic-like complex, a complex localized at the transition zone of primary cilia and acting as a barrier that prevents diffusion of transmembrane proteins between the cilia and plasma membranes. Required for ciliogenesis and sonic hedgehog/SHH signaling. The protein is Transmembrane protein 17 (TMEM17) of Bos taurus (Bovine).